A 261-amino-acid polypeptide reads, in one-letter code: Carnitinyl-CoA dehydratase (261 aa).

The Nucleophile role is filled by Glu111. The active-site Proton acceptor is the Glu131.

Belongs to the enoyl-CoA hydratase/isomerase family.

The enzyme catalyses (R)-carnitinyl-CoA = crotonobetainyl-CoA + H2O. Its pathway is amine and polyamine metabolism; carnitine metabolism. Catalyzes the reversible dehydration of L-carnitinyl-CoA to crotonobetainyl-CoA. The sequence is that of Carnitinyl-CoA dehydratase from Proteus mirabilis (strain HI4320).